Consider the following 614-residue polypeptide: UvrABC system protein C (614 aa).

The 78-residue stretch at Asp12–Val89 folds into the GIY-YIG domain. Positions Ala198–Val233 constitute a UVR domain.

This sequence belongs to the UvrC family. In terms of assembly, interacts with UvrB in an incision complex.

Its subcellular location is the cytoplasm. Functionally, the UvrABC repair system catalyzes the recognition and processing of DNA lesions. UvrC both incises the 5' and 3' sides of the lesion. The N-terminal half is responsible for the 3' incision and the C-terminal half is responsible for the 5' incision. This is UvrABC system protein C from Desulforudis audaxviator (strain MP104C).